Consider the following 1029-residue polypeptide: Error-prone DNA polymerase (1029 aa).

The protein belongs to the DNA polymerase type-C family. DnaE2 subfamily.

It localises to the cytoplasm. It carries out the reaction DNA(n) + a 2'-deoxyribonucleoside 5'-triphosphate = DNA(n+1) + diphosphate. Functionally, DNA polymerase involved in damage-induced mutagenesis and translesion synthesis (TLS). It is not the major replicative DNA polymerase. This is Error-prone DNA polymerase from Saccharophagus degradans (strain 2-40 / ATCC 43961 / DSM 17024).